The chain runs to 315 residues: Methionine import ATP-binding protein MetN (315 aa).

The ABC transporter domain maps to I2 to V219. G16 to S23 is a binding site for ATP.

It belongs to the ABC transporter superfamily. Methionine importer (TC 3.A.1.24) family. The complex is composed of two ATP-binding proteins (MetN), two transmembrane proteins (MetI) and a solute-binding protein (MetQ).

The protein resides in the cell inner membrane. It catalyses the reaction L-methionine(out) + ATP + H2O = L-methionine(in) + ADP + phosphate + H(+). It carries out the reaction D-methionine(out) + ATP + H2O = D-methionine(in) + ADP + phosphate + H(+). Its function is as follows. Part of the ABC transporter complex MetNIQ involved in methionine import. Responsible for energy coupling to the transport system. This Salmonella enteritidis protein is Methionine import ATP-binding protein MetN.